The primary structure comprises 437 residues: GTPase Obg (437 aa).

Positions 2–160 (SMFLDTAKIS…RQLELELKIL (159 aa)) constitute an Obg domain. Residues 161–338 (ADVGLVGFPS…LLEATAELLA (178 aa)) form the OBG-type G domain. Residues 167-174 (GFPSVGKS), 192-196 (FTTIV), 214-217 (DLPG), 284-287 (NKMD), and 319-321 (SSL) contribute to the GTP site. 2 residues coordinate Mg(2+): Ser174 and Thr194. Positions 359–437 (GFAETEKDFE…IGKFEFEFVD (79 aa)) constitute an OCT domain.

Belongs to the TRAFAC class OBG-HflX-like GTPase superfamily. OBG GTPase family. As to quaternary structure, monomer. Requires Mg(2+) as cofactor.

It localises to the cytoplasm. Its function is as follows. An essential GTPase which binds GTP, GDP and possibly (p)ppGpp with moderate affinity, with high nucleotide exchange rates and a fairly low GTP hydrolysis rate. Plays a role in control of the cell cycle, stress response, ribosome biogenesis and in those bacteria that undergo differentiation, in morphogenesis control. This Streptococcus pyogenes serotype M4 (strain MGAS10750) protein is GTPase Obg.